Consider the following 37-residue polypeptide: U1-theraphotoxin-Hs1b (37 aa).

3 cysteine pairs are disulfide-bonded: Cys-4/Cys-18, Cys-8/Cys-29, and Cys-23/Cys-34.

In terms of assembly, form 1 and form 2 may dimerize. Expressed by the venom gland.

It localises to the secreted. Lethal neurotoxin that blocks neuromuscular transmission. Acts cooperatively to potentiate the activity of huwentoxin-I. The protein is U1-theraphotoxin-Hs1b of Cyriopagopus schmidti (Chinese bird spider).